The primary structure comprises 785 residues: Semaphorin-3F (785 aa).

The N-terminal stretch at 1 to 18 is a signal peptide; that stretch reads MLVTAFILWASLLTGAWP. A Sema domain is found at 31 to 545; that stretch reads RVRLSFKELK…SAVGVTHLSL (515 aa). N-linked (GlcNAc...) asparagine glycosylation occurs at asparagine 53. Cysteine 104 and cysteine 115 form a disulfide bridge. Asparagine 126 carries N-linked (GlcNAc...) asparagine glycosylation. 4 disulfides stabilise this stretch: cysteine 133-cysteine 142, cysteine 300-cysteine 412, cysteine 324-cysteine 372, and cysteine 548-cysteine 566. Positions 583–602 are disordered; the sequence is RSRRQDVRHGNPIRQCRGFN. Positions 605–695 constitute an Ig-like C2-type domain; it reads ANKNAVESVQ…KHIVTRVQLH (91 aa). A disulfide bridge connects residues cysteine 678 and cysteine 746. The interval 753–785 is disordered; sequence VPPRPREAPGALRPPELQDQKKPRNRRHHPPDT. The segment covering 775 to 785 has biased composition (basic residues); the sequence is PRNRRHHPPDT.

It belongs to the semaphorin family. In terms of tissue distribution, expressed ubiquitously in adulthood. During embryogenesis, expressed in subregions of the central nervous system and various other tissues like skin, kidney, lung and intestine.

It localises to the secreted. In Mus musculus (Mouse), this protein is Semaphorin-3F (Sema3f).